We begin with the raw amino-acid sequence, 211 residues long: Large ribosomal subunit protein uL4 (211 aa).

Residues 52–79 (GRAEVHGSNSKPYSQKGTGRARRGDKKS) form a disordered region. The segment covering 58-68 (GSNSKPYSQKG) has biased composition (polar residues).

The protein belongs to the universal ribosomal protein uL4 family. In terms of assembly, part of the 50S ribosomal subunit.

One of the primary rRNA binding proteins, this protein initially binds near the 5'-end of the 23S rRNA. It is important during the early stages of 50S assembly. It makes multiple contacts with different domains of the 23S rRNA in the assembled 50S subunit and ribosome. In terms of biological role, forms part of the polypeptide exit tunnel. The chain is Large ribosomal subunit protein uL4 from Treponema denticola (strain ATCC 35405 / DSM 14222 / CIP 103919 / JCM 8153 / KCTC 15104).